We begin with the raw amino-acid sequence, 206 residues long: Pyridoxine/pyridoxamine 5'-phosphate oxidase (206 aa).

FMN-binding positions include 53–58 (RMVLLK), 68–69 (YT), lysine 75, and glutamine 97. Position 58 (lysine 58) interacts with substrate. Substrate-binding residues include tyrosine 115, arginine 119, and serine 123. Residues 132-133 (QS) and tryptophan 177 contribute to the FMN site. 183–185 (RLH) serves as a coordination point for substrate. Arginine 187 is a binding site for FMN.

The protein belongs to the pyridoxamine 5'-phosphate oxidase family. Homodimer. FMN is required as a cofactor.

It catalyses the reaction pyridoxamine 5'-phosphate + O2 + H2O = pyridoxal 5'-phosphate + H2O2 + NH4(+). It carries out the reaction pyridoxine 5'-phosphate + O2 = pyridoxal 5'-phosphate + H2O2. Its pathway is cofactor metabolism; pyridoxal 5'-phosphate salvage; pyridoxal 5'-phosphate from pyridoxamine 5'-phosphate: step 1/1. It functions in the pathway cofactor metabolism; pyridoxal 5'-phosphate salvage; pyridoxal 5'-phosphate from pyridoxine 5'-phosphate: step 1/1. In terms of biological role, catalyzes the oxidation of either pyridoxine 5'-phosphate (PNP) or pyridoxamine 5'-phosphate (PMP) into pyridoxal 5'-phosphate (PLP). In Allorhizobium ampelinum (strain ATCC BAA-846 / DSM 112012 / S4) (Agrobacterium vitis (strain S4)), this protein is Pyridoxine/pyridoxamine 5'-phosphate oxidase.